Consider the following 408-residue polypeptide: Lysosome-associated membrane glycoprotein 3 (408 aa).

Residues 1-20 form the signal peptide; sequence MPGQTSAVAVLLCLAVILHG. Residues 21-373 are Lumenal-facing; the sequence is YQIREKEFPE…IVDECLSDYT (353 aa). 2 N-linked (GlcNAc...) asparagine glycosylation sites follow: N55 and N225. The cysteines at positions 230 and 267 are disulfide-linked. N-linked (GlcNAc...) asparagine glycosylation is present at N284. A disulfide bond links C331 and C368. The helical transmembrane segment at 374–394 threads the bilayer; sequence VVLPVVGIIVVVLCVVGLGIY. Topologically, residues 395 to 408 are cytoplasmic; that stretch reads KIRQRRQSSAYQRI.

Belongs to the LAMP family. In terms of assembly, monomer. Interacts with FURIN.

It is found in the cell surface. The protein localises to the lysosome membrane. It localises to the cytoplasmic vesicle membrane. Its subcellular location is the early endosome membrane. In terms of biological role, lysosomal membrane glycoprotein which plays a role in the unfolded protein response (UPR) that contributes to protein degradation and cell survival during proteasomal dysfunction. Plays a role in the process of fusion of the lysosome with the autophagosome, thereby modulating the autophagic process. Promotes hepatocellular lipogenesis through activation of the PI3K/Akt pathway. May also play a role in dendritic cell function and in adaptive immunity. The chain is Lysosome-associated membrane glycoprotein 3 (Lamp3) from Rattus norvegicus (Rat).